The following is a 175-amino-acid chain: Small ribosomal subunit protein uS5 (175 aa).

The region spanning Leu-11–Val-74 is the S5 DRBM domain.

The protein belongs to the universal ribosomal protein uS5 family. As to quaternary structure, part of the 30S ribosomal subunit. Contacts proteins S4 and S8.

In terms of biological role, with S4 and S12 plays an important role in translational accuracy. Its function is as follows. Located at the back of the 30S subunit body where it stabilizes the conformation of the head with respect to the body. The chain is Small ribosomal subunit protein uS5 from Rickettsia prowazekii (strain Madrid E).